Consider the following 1243-residue polypeptide: Plasma membrane calcium-transporting ATPase 2 (1243 aa).

Residues 1 to 13 (MGDMTNSDFYSKN) are compositionally biased toward polar residues. The tract at residues 1 to 24 (MGDMTNSDFYSKNQRNESSHGGEF) is disordered. Residues 1 to 94 (MGDMTNSDFY…NFIPPKKPKT (94 aa)) are Cytoplasmic-facing. Phosphoserine is present on Ser18. A helical membrane pass occupies residues 95–115 (FLQLVWEALQDVTLIILEIAA). Topologically, residues 116-152 (IISLGLSFYHPPGEGNEGCATAQGGAEDEGEAEAGWI) are extracellular. The chain crosses the membrane as a helical span at residues 153–173 (EGAAILLSVICVVLVTAFNDW). Residues 174 to 390 (SKEKQFRGLQ…KEKSVLQGKL (217 aa)) lie on the Cytoplasmic side of the membrane. The disordered stretch occupies residues 334–381 (GKMQDGNVDASQSKAKQQDGAAAMEMQPLKSAEGGDADDRKKASMHKK). A helical transmembrane segment spans residues 391 to 410 (TKLAVQIGKAGLVMSAITVI). Residues 411 to 443 (ILVLYFTVDTFVVNKKPWLPECTPVYVQYFVKF) are Extracellular-facing. The chain crosses the membrane as a helical span at residues 444-461 (FIIGVTVLVVAVPEGLPL). The Cytoplasmic portion of the chain corresponds to 462 to 875 (AVTISLAYSV…MWGRNVYDSI (414 aa)). Residue Asp499 is the 4-aspartylphosphate intermediate of the active site. Positions 820 and 824 each coordinate Mg(2+). A helical transmembrane segment spans residues 876–895 (SKFLQFQLTVNVVAVIVAFT). The Extracellular portion of the chain corresponds to 896-905 (GACITQDSPL). A helical transmembrane segment spans residues 906 to 926 (KAVQMLWVNLIMDTFASLALA). Topologically, residues 927 to 946 (TEPPTETLLLRKPYGRNKPL) are cytoplasmic. The chain crosses the membrane as a helical span at residues 947 to 969 (ISRTMMKNILGHAVYQLALIFTL). Residues 970-987 (LFVGEKMFQIDSGRNAPL) are Extracellular-facing. A helical transmembrane segment spans residues 988 to 1009 (HSPPSEHYTIIFNTFVMMQLFN). Residues 1010 to 1028 (EINARKIHGERNVFDGIFR) lie on the Cytoplasmic side of the membrane. Residues 1029–1050 (NPIFCTIVLGTFAIQIVIVQFG) form a helical membrane-spanning segment. The Extracellular portion of the chain corresponds to 1051–1060 (GKPFSCSPLQ). The helical transmembrane segment at 1061–1082 (LDQWMWCIFIGLGELVWGQVIA) threads the bilayer. At 1083 to 1243 (TIPTSRLKFL…SPIHSLETSL (161 aa)) the chain is on the cytoplasmic side. Glu1120, Arg1132, and Leu1134 each carry phosphoserine. The calmodulin-binding subdomain A stretch occupies residues 1123–1140 (LRRGQILWFRGLNRIQTQ). A Phosphothreonine; by PKC modification is found at Thr1139. The calmodulin-binding subdomain B stretch occupies residues 1141–1150 (IRVVKAFRSS). A phosphoserine mark is found at Ala1146, Leu1151, Ser1163, His1165, Asp1177, and Ser1178. Residue Thr1188 is modified to Phosphothreonine. The tract at residues 1194–1243 (AALKQNSSPPSSLNKNNSAIDSGINLTTDTSKSATSSSPGSPIHSLETSL) is disordered. Low complexity-rich tracts occupy residues 1196–1211 (LKQN…KNNS) and 1220–1234 (TTDT…SPGS). At Ser1201 the chain carries Phosphoserine; by PKA. Ser1211 carries the phosphoserine modification.

The protein belongs to the cation transport ATPase (P-type) (TC 3.A.3) family. Type IIB subfamily. As to quaternary structure, interacts with PDZD11. As to expression, mainly expressed in brain cortex. Found in low levels in skeletal muscle, heart muscle, stomach, liver, kidney and lung. Isoforms containing segment B are found in brain cortex and at low levels in other tissues. Isoforms containing segments X and W are found at low levels in all tissues. Isoforms containing segment A and segment Z are found at low levels in skeletal muscle and heart muscle.

It localises to the cell membrane. It is found in the synapse. The protein localises to the apical cell membrane. Its subcellular location is the basolateral cell membrane. It carries out the reaction Ca(2+)(in) + ATP + H2O = Ca(2+)(out) + ADP + phosphate + H(+). With respect to regulation, up-regulated by calmodulin which increases the affinity of the pump for Ca(2+) ions. Its function is as follows. ATP-driven Ca(2+) ion pump involved in the maintenance of basal intracellular Ca(2+) levels in specialized cells of cerebellar circuit and vestibular and cochlear systems. Uses ATP as an energy source to transport cytosolic Ca(2+) ions across the plasma membrane to the extracellular compartment. Has fast activation and Ca(2+) clearance rate suited to control fast neuronal Ca(2+) dynamics. At parallel fiber to Purkinje neuron synapse, mediates presynaptic Ca(2+) efflux in response to climbing fiber-induced Ca(2+) rise. Provides for fast return of Ca(2+) concentrations back to their resting levels, ultimately contributing to long-term depression induction and motor learning. Plays an essential role in hearing and balance. In cochlear hair cells, shuttles Ca(2+) ions from stereocilia to the endolymph and dissipates Ca(2+) transients generated by the opening of the mechanoelectrical transduction channels. Regulates Ca(2+) levels in the vestibular system, where it contributes to the formation of otoconia. In non-excitable cells, regulates Ca(2+) signaling through spatial control of Ca(2+) ions extrusion and dissipation of Ca(2+) transients generated by store-operated channels. In lactating mammary gland, allows for the high content of Ca(2+) ions in the milk. The protein is Plasma membrane calcium-transporting ATPase 2 of Homo sapiens (Human).